The sequence spans 139 residues: Large ribosomal subunit protein uL16 (139 aa).

Residues 1-13 (MLQPARRKYRKEQ) are compositionally biased toward basic residues. Positions 1 to 23 (MLQPARRKYRKEQKGRNTGISHS) are disordered.

Belongs to the universal ribosomal protein uL16 family. In terms of assembly, part of the 50S ribosomal subunit.

In terms of biological role, binds 23S rRNA and is also seen to make contacts with the A and possibly P site tRNAs. This is Large ribosomal subunit protein uL16 from Herminiimonas arsenicoxydans.